We begin with the raw amino-acid sequence, 284 residues long: 4-diphosphocytidyl-2-C-methyl-D-erythritol kinase (284 aa).

Lys14 is an active-site residue. Pro98–Ser108 contacts ATP. Asp140 is an active-site residue.

The protein belongs to the GHMP kinase family. IspE subfamily.

It catalyses the reaction 4-CDP-2-C-methyl-D-erythritol + ATP = 4-CDP-2-C-methyl-D-erythritol 2-phosphate + ADP + H(+). It functions in the pathway isoprenoid biosynthesis; isopentenyl diphosphate biosynthesis via DXP pathway; isopentenyl diphosphate from 1-deoxy-D-xylulose 5-phosphate: step 3/6. Functionally, catalyzes the phosphorylation of the position 2 hydroxy group of 4-diphosphocytidyl-2C-methyl-D-erythritol. The sequence is that of 4-diphosphocytidyl-2-C-methyl-D-erythritol kinase from Shewanella oneidensis (strain ATCC 700550 / JCM 31522 / CIP 106686 / LMG 19005 / NCIMB 14063 / MR-1).